The following is a 436-amino-acid chain: Testis-expressed protein 44 (436 aa).

2 stretches are compositionally biased toward acidic residues: residues 1–10 (MTTEPLEDPE) and 45–54 (LPDEVPPEDI). 2 disordered regions span residues 1–142 (MTTE…LTSL) and 165–307 (AENN…SLYG). Composition is skewed to polar residues over residues 81 to 103 (ASMQIATSMGQNKDRASMQTDTS) and 167 to 195 (NNRTSRSRTVSPSDSQTQEKTSGKSTVSE). The segment covering 234–247 (EPTKSADQEAEDFK) has biased composition (basic and acidic residues). A compositionally biased stretch (pro residues) spans 273-289 (QAPPSPNSPADSPPPSP). S375 carries the post-translational modification Phosphoserine.

Its subcellular location is the cytoplasm. The protein is Testis-expressed protein 44 (Tex44) of Rattus norvegicus (Rat).